The primary structure comprises 375 residues: UDP-N-acetylglucosamine--N-acetylmuramyl-(pentapeptide) pyrophosphoryl-undecaprenol N-acetylglucosamine transferase (375 aa).

UDP-N-acetyl-alpha-D-glucosamine-binding positions include 13–15 (TGG), asparagine 124, arginine 165, serine 193, and glutamine 294.

The protein belongs to the glycosyltransferase 28 family. MurG subfamily.

It is found in the cell inner membrane. The enzyme catalyses di-trans,octa-cis-undecaprenyl diphospho-N-acetyl-alpha-D-muramoyl-L-alanyl-D-glutamyl-meso-2,6-diaminopimeloyl-D-alanyl-D-alanine + UDP-N-acetyl-alpha-D-glucosamine = di-trans,octa-cis-undecaprenyl diphospho-[N-acetyl-alpha-D-glucosaminyl-(1-&gt;4)]-N-acetyl-alpha-D-muramoyl-L-alanyl-D-glutamyl-meso-2,6-diaminopimeloyl-D-alanyl-D-alanine + UDP + H(+). Its pathway is cell wall biogenesis; peptidoglycan biosynthesis. Cell wall formation. Catalyzes the transfer of a GlcNAc subunit on undecaprenyl-pyrophosphoryl-MurNAc-pentapeptide (lipid intermediate I) to form undecaprenyl-pyrophosphoryl-MurNAc-(pentapeptide)GlcNAc (lipid intermediate II). This Mesorhizobium japonicum (strain LMG 29417 / CECT 9101 / MAFF 303099) (Mesorhizobium loti (strain MAFF 303099)) protein is UDP-N-acetylglucosamine--N-acetylmuramyl-(pentapeptide) pyrophosphoryl-undecaprenol N-acetylglucosamine transferase.